The sequence spans 357 residues: Phospho-N-acetylmuramoyl-pentapeptide-transferase (357 aa).

The next 10 membrane-spanning stretches (helical) occupy residues 23–43, 70–90, 91–111, 127–147, 171–191, 196–216, 236–256, 260–280, 286–306, and 334–354; these read AIFS…YFIY, TMGG…YCNL, SNIY…IGFI, LKWK…MIKI, YLYV…VNLT, GLAI…SLFS, LAIL…FNSY, VFMG…IAIL, LLII…LQII, and LIIV…LISL.

It belongs to the glycosyltransferase 4 family. MraY subfamily. It depends on Mg(2+) as a cofactor.

It localises to the cell inner membrane. It carries out the reaction UDP-N-acetyl-alpha-D-muramoyl-L-alanyl-gamma-D-glutamyl-meso-2,6-diaminopimeloyl-D-alanyl-D-alanine + di-trans,octa-cis-undecaprenyl phosphate = di-trans,octa-cis-undecaprenyl diphospho-N-acetyl-alpha-D-muramoyl-L-alanyl-D-glutamyl-meso-2,6-diaminopimeloyl-D-alanyl-D-alanine + UMP. Its pathway is cell wall biogenesis; peptidoglycan biosynthesis. Its function is as follows. Catalyzes the initial step of the lipid cycle reactions in the biosynthesis of the cell wall peptidoglycan: transfers peptidoglycan precursor phospho-MurNAc-pentapeptide from UDP-MurNAc-pentapeptide onto the lipid carrier undecaprenyl phosphate, yielding undecaprenyl-pyrophosphoryl-MurNAc-pentapeptide, known as lipid I. The polypeptide is Phospho-N-acetylmuramoyl-pentapeptide-transferase (Buchnera aphidicola subsp. Acyrthosiphon pisum (strain Tuc7)).